Here is a 321-residue protein sequence, read N- to C-terminus: Olfactory receptor 5K3 (321 aa).

At 1–25 (MNKENHSLIAEFILTGFTYHPKLKT) the chain is on the extracellular side. N-linked (GlcNAc...) asparagine glycosylation is present at Asn5. The chain crosses the membrane as a helical span at residues 26-46 (VLFVVFFAIYLITMVGNIGLV). Over 47–56 (ALIYIEQRLH) the chain is Cytoplasmic. The chain crosses the membrane as a helical span at residues 57–77 (TPMYIFLGNLVLMDSCCSSAI). At 78 to 97 (TPKMLENFFSEDKRITLYEC) the chain is on the extracellular side. Cys97 and Cys179 are oxidised to a cystine. A helical membrane pass occupies residues 98 to 118 (MAQFYFLCLAETTDCFLLAAM). Topologically, residues 119–143 (AYDCYVAICNPLQYHTMMSKTLCIQ) are cytoplasmic. The helical transmembrane segment at 144–164 (MTAGAYLAGNLHPMIEVEFLL) threads the bilayer. The Extracellular portion of the chain corresponds to 165 to 196 (RLTFCGSHQINHFFCDVLPLYRLSCINPYINE). Residues 197-217 (LVLFILAGSIQIFTIVLVSYF) traverse the membrane as a helical segment. At 218-235 (YILFTIFTMKSKEGRGKA) the chain is on the cytoplasmic side. A helical membrane pass occupies residues 236–256 (LSTCASHFLSVSIFCDSLLFM). The Extracellular portion of the chain corresponds to 257–269 (YARPGAVNEGDKD). The helical transmembrane segment at 270–290 (IPVAIFYTLVIPLLNPFIYSL) threads the bilayer. Residues 291-321 (RNKEVINIMKKIMKKRKFCHILKQMSSPLAT) lie on the Cytoplasmic side of the membrane.

The protein belongs to the G-protein coupled receptor 1 family.

The protein localises to the cell membrane. In terms of biological role, odorant receptor. The sequence is that of Olfactory receptor 5K3 (OR5K3) from Homo sapiens (Human).